Here is an 847-residue protein sequence, read N- to C-terminus: Alanine--tRNA ligase (847 aa).

Zn(2+) contacts are provided by H554, H558, C656, and H660.

It belongs to the class-II aminoacyl-tRNA synthetase family. Requires Zn(2+) as cofactor.

Its subcellular location is the cytoplasm. The enzyme catalyses tRNA(Ala) + L-alanine + ATP = L-alanyl-tRNA(Ala) + AMP + diphosphate. In terms of biological role, catalyzes the attachment of alanine to tRNA(Ala) in a two-step reaction: alanine is first activated by ATP to form Ala-AMP and then transferred to the acceptor end of tRNA(Ala). Also edits incorrectly charged Ser-tRNA(Ala) and Gly-tRNA(Ala) via its editing domain. The polypeptide is Alanine--tRNA ligase (Helicobacter pylori (strain Shi470)).